The chain runs to 1018 residues: Isoleucine--tRNA ligase (1018 aa).

The 'HIGH' region signature appears at 43-53 (PYTTGRIHLGT). The short motif at 586–590 (KMSKS) is the 'KMSKS' region element. ATP is bound at residue K589.

The protein belongs to the class-I aminoacyl-tRNA synthetase family. IleS type 2 subfamily. As to quaternary structure, monomer. The cofactor is Zn(2+).

The protein resides in the cytoplasm. It carries out the reaction tRNA(Ile) + L-isoleucine + ATP = L-isoleucyl-tRNA(Ile) + AMP + diphosphate. Catalyzes the attachment of isoleucine to tRNA(Ile). As IleRS can inadvertently accommodate and process structurally similar amino acids such as valine, to avoid such errors it has two additional distinct tRNA(Ile)-dependent editing activities. One activity is designated as 'pretransfer' editing and involves the hydrolysis of activated Val-AMP. The other activity is designated 'posttransfer' editing and involves deacylation of mischarged Val-tRNA(Ile). This Archaeoglobus fulgidus (strain ATCC 49558 / DSM 4304 / JCM 9628 / NBRC 100126 / VC-16) protein is Isoleucine--tRNA ligase.